The primary structure comprises 84 residues: Three-finger toxin 3FTx-1 (84 aa).

Residues 1–21 (MKTLLLTLVVVTIVCLDLGNS) form the signal peptide. Disulfide bonds link Cys24–Cys41, Cys34–Cys59, Cys63–Cys71, and Cys72–Cys77. A glycan (N-linked (GlcNAc...) asparagine) is linked at Asn78.

Belongs to the three-finger toxin family. Short-chain subfamily. Expressed by the venom gland.

It is found in the secreted. This chain is Three-finger toxin 3FTx-1, found in Micrurus corallinus (Brazilian coral snake).